The chain runs to 155 residues: Large ribosomal subunit protein uL22c (155 aa).

Belongs to the universal ribosomal protein uL22 family. As to quaternary structure, part of the 50S ribosomal subunit.

The protein resides in the plastid. It is found in the chloroplast. Its function is as follows. This protein binds specifically to 23S rRNA. Functionally, the globular domain of the protein is located near the polypeptide exit tunnel on the outside of the subunit, while an extended beta-hairpin is found that lines the wall of the exit tunnel in the center of the 70S ribosome. The polypeptide is Large ribosomal subunit protein uL22c (rpl22) (Nicotiana tomentosiformis (Tobacco)).